Consider the following 221-residue polypeptide: GTP-binding nuclear protein Ran/TC4 (221 aa).

The Small GTPase Ran-type domain occupies 10 to 174 (DYPSFKLVIV…LYLARKLAGD (165 aa)). Residue 21 to 28 (DGGTGKTT) participates in GTP binding. The switch-I stretch occupies residues 40–48 (KKYEPTIGV). Residues G71, 125 to 128 (NKVD), and 153 to 155 (SAK) each bind GTP. The tract at residues 71 to 87 (GQEKFGGLRDGYYIHGQ) is switch-II.

Belongs to the small GTPase superfamily. Ran family. In terms of assembly, found in a nuclear export complex with RanGTP, exportin and pre-miRNA.

The protein localises to the nucleus. GTP-binding protein involved in nucleocytoplasmic transport. Required for the import of protein into the nucleus and also for RNA export. Involved in chromatin condensation and control of cell cycle. The sequence is that of GTP-binding nuclear protein Ran/TC4 from Vicia faba (Broad bean).